The primary structure comprises 410 residues: UBX domain-containing protein 3 (410 aa).

2 disordered regions span residues 46–139 (EEDH…PDPK) and 154–212 (TISP…EKPL). The span at 65–85 (GSSSGISGGDQQPPRPLQRQQ) shows a compositional bias: low complexity. The segment covering 86–97 (NTQGQGMKSGTA) has biased composition (polar residues). Phosphoserine occurs at positions 156, 167, and 186. A compositionally biased stretch (low complexity) spans 163 to 174 (SGPSSLASSWAS). Positions 183-196 (NEASGSTTPVTQSG) are enriched in polar residues. A Phosphothreonine modification is found at T190. One can recognise an SEP domain in the interval 211-276 (PLRRTLYFWR…VQHRMDEDYV (66 aa)). The 77-residue stretch at 334-410 (ENKPTTRIQV…KNASLVQKSL (77 aa)) folds into the UBX domain.

Interacts with cdc48.

Its function is as follows. Involved in CDC48-dependent protein degradation through the ubiquitin/proteasome pathway. Involved in delivery of substrates to the 26S proteasome. Also required for membrane fusion and sporulation. The polypeptide is UBX domain-containing protein 3 (ubx3) (Schizosaccharomyces pombe (strain 972 / ATCC 24843) (Fission yeast)).